We begin with the raw amino-acid sequence, 249 residues long: Probable transcriptional regulatory protein LBL_2537 (249 aa).

It belongs to the TACO1 family.

The protein localises to the cytoplasm. This is Probable transcriptional regulatory protein LBL_2537 from Leptospira borgpetersenii serovar Hardjo-bovis (strain L550).